A 309-amino-acid polypeptide reads, in one-letter code: Uridylate-specific endoribonuclease C (309 aa).

The N-terminal stretch at 1–22 is a signal peptide; the sequence is MASGYDFGWIPVLLSLFTLTDA. The EndoU domain occupies 27–303; sequence VNQELSNIFN…IGTAYPKLLS (277 aa). N-linked (GlcNAc...) asparagine glycosylation is found at Asn-53 and Asn-121. Catalysis depends on residues His-181, His-197, and Lys-242.

Belongs to the ENDOU family. Monomer. It depends on Mn(2+) as a cofactor.

The protein resides in the secreted. It carries out the reaction ribonucleotidyl-uridine-RNA = a 5'-end dephospho-uridine-RNA + a 3'-end 2',3'-cyclophospho-ribonucleotide-RNA. Endoribonuclease that cleaves single-stranded RNAs at 5' of uridylates and releases a product with a 2',3'-cyclic phosphate at the 3'-end. The UU and GU sites are more efficiently cleaved than CU and AU sites. The sequence is that of Uridylate-specific endoribonuclease C (endouc) from Danio rerio (Zebrafish).